Here is a 174-residue protein sequence, read N- to C-terminus: NAD(P)H-quinone oxidoreductase subunit J (174 aa).

This sequence belongs to the complex I 30 kDa subunit family. NDH-1 can be composed of about 15 different subunits; different subcomplexes with different compositions have been identified which probably have different functions.

The protein localises to the cellular thylakoid membrane. The catalysed reaction is a plastoquinone + NADH + (n+1) H(+)(in) = a plastoquinol + NAD(+) + n H(+)(out). It carries out the reaction a plastoquinone + NADPH + (n+1) H(+)(in) = a plastoquinol + NADP(+) + n H(+)(out). Its function is as follows. NDH-1 shuttles electrons from an unknown electron donor, via FMN and iron-sulfur (Fe-S) centers, to quinones in the respiratory and/or the photosynthetic chain. The immediate electron acceptor for the enzyme in this species is believed to be plastoquinone. Couples the redox reaction to proton translocation, and thus conserves the redox energy in a proton gradient. Cyanobacterial NDH-1 also plays a role in inorganic carbon-concentration. This Picosynechococcus sp. (strain ATCC 27264 / PCC 7002 / PR-6) (Agmenellum quadruplicatum) protein is NAD(P)H-quinone oxidoreductase subunit J.